The following is a 178-amino-acid chain: Large ribosomal subunit protein uL6 (178 aa).

The protein belongs to the universal ribosomal protein uL6 family. In terms of assembly, part of the 50S ribosomal subunit.

In terms of biological role, this protein binds to the 23S rRNA, and is important in its secondary structure. It is located near the subunit interface in the base of the L7/L12 stalk, and near the tRNA binding site of the peptidyltransferase center. The chain is Large ribosomal subunit protein uL6 from Staphylococcus epidermidis (strain ATCC 35984 / DSM 28319 / BCRC 17069 / CCUG 31568 / BM 3577 / RP62A).